A 99-amino-acid chain; its full sequence is Putative UPF0320 protein YDR543C (99 aa).

The disordered stretch occupies residues 80-99 (EKSPPKSPKHKNILSFNNNT).

Belongs to the UPF0320 family.

The protein is Putative UPF0320 protein YDR543C of Saccharomyces cerevisiae (strain ATCC 204508 / S288c) (Baker's yeast).